The following is a 115-amino-acid chain: Large ribosomal subunit protein bL19 (115 aa).

It belongs to the bacterial ribosomal protein bL19 family.

In terms of biological role, this protein is located at the 30S-50S ribosomal subunit interface and may play a role in the structure and function of the aminoacyl-tRNA binding site. This Bacillus velezensis (strain DSM 23117 / BGSC 10A6 / LMG 26770 / FZB42) (Bacillus amyloliquefaciens subsp. plantarum) protein is Large ribosomal subunit protein bL19.